Consider the following 421-residue polypeptide: NADH-quinone oxidoreductase subunit F (421 aa).

The tract at residues 1–25 (MLKEEDKIFTNLHGQQSHDLKSSKK) is disordered. The segment covering 16–25 (QSHDLKSSKK) has biased composition (basic and acidic residues). 54 to 63 (GRGGAGFSTG) is an NAD(+) binding site. Position 166 to 213 (166 to 213 (GAGAYICGEETALLESLEGKKGMPRLKPPFPAGFGLYGCPTTINNVES)) interacts with FMN. The [4Fe-4S] cluster site is built by Cys344, Cys347, Cys350, and Cys390.

It belongs to the complex I 51 kDa subunit family. FMN is required as a cofactor. It depends on [4Fe-4S] cluster as a cofactor.

The catalysed reaction is a quinone + NADH + 5 H(+)(in) = a quinol + NAD(+) + 4 H(+)(out). Functionally, NDH-1 shuttles electrons from NADH, via FMN and iron-sulfur (Fe-S) centers, to quinones in the respiratory chain. Couples the redox reaction to proton translocation (for every two electrons transferred, four hydrogen ions are translocated across the cytoplasmic membrane), and thus conserves the redox energy in a proton gradient. This Rickettsia massiliae (strain Mtu5) protein is NADH-quinone oxidoreductase subunit F (nuoF).